We begin with the raw amino-acid sequence, 223 residues long: Octanoyltransferase (223 aa).

The BPL/LPL catalytic domain maps to 35 to 214 (GEARELIWLL…HFPAMLAGLR (180 aa)). Residues 74–81 (RGGRYTYH), 145–147 (AIG), and 158–160 (GFS) each bind substrate. Catalysis depends on Cys-176, which acts as the Acyl-thioester intermediate.

It belongs to the LipB family.

It is found in the cytoplasm. The catalysed reaction is octanoyl-[ACP] + L-lysyl-[protein] = N(6)-octanoyl-L-lysyl-[protein] + holo-[ACP] + H(+). The protein operates within protein modification; protein lipoylation via endogenous pathway; protein N(6)-(lipoyl)lysine from octanoyl-[acyl-carrier-protein]: step 1/2. Catalyzes the transfer of endogenously produced octanoic acid from octanoyl-acyl-carrier-protein onto the lipoyl domains of lipoate-dependent enzymes. Lipoyl-ACP can also act as a substrate although octanoyl-ACP is likely to be the physiological substrate. The chain is Octanoyltransferase from Rhizorhabdus wittichii (strain DSM 6014 / CCUG 31198 / JCM 15750 / NBRC 105917 / EY 4224 / RW1) (Sphingomonas wittichii).